A 133-amino-acid chain; its full sequence is UPF0146 protein MTH_1000 (133 aa).

This sequence belongs to the UPF0146 family.

The polypeptide is UPF0146 protein MTH_1000 (Methanothermobacter thermautotrophicus (strain ATCC 29096 / DSM 1053 / JCM 10044 / NBRC 100330 / Delta H) (Methanobacterium thermoautotrophicum)).